Here is a 299-residue protein sequence, read N- to C-terminus: Acetaldehyde dehydrogenase 1 (299 aa).

C130 acts as the Acyl-thioester intermediate in catalysis. Residues 161–169 and N272 each bind NAD(+); that span reads SVGPGTRKN.

This sequence belongs to the acetaldehyde dehydrogenase family.

It catalyses the reaction acetaldehyde + NAD(+) + CoA = acetyl-CoA + NADH + H(+). The protein is Acetaldehyde dehydrogenase 1 (mhpF) of Burkholderia cenocepacia (strain ATCC BAA-245 / DSM 16553 / LMG 16656 / NCTC 13227 / J2315 / CF5610) (Burkholderia cepacia (strain J2315)).